The chain runs to 243 residues: LexA repressor 2 (243 aa).

The segment at residues 48-68 (IREIGDAVGLTSTSSVAHQLR) is a DNA-binding region (H-T-H motif). Residues Ser-167 and Lys-204 each act as for autocatalytic cleavage activity in the active site.

The protein belongs to the peptidase S24 family. Homodimer.

The catalysed reaction is Hydrolysis of Ala-|-Gly bond in repressor LexA.. In terms of biological role, represses a number of genes involved in the response to DNA damage (SOS response), including recA and lexA. In the presence of single-stranded DNA, RecA interacts with LexA causing an autocatalytic cleavage which disrupts the DNA-binding part of LexA, leading to derepression of the SOS regulon and eventually DNA repair. This chain is LexA repressor 2, found in Nocardia farcinica (strain IFM 10152).